A 432-amino-acid chain; its full sequence is Glutamate-1-semialdehyde 2,1-aminomutase (432 aa).

K269 carries the N6-(pyridoxal phosphate)lysine modification.

This sequence belongs to the class-III pyridoxal-phosphate-dependent aminotransferase family. HemL subfamily. As to quaternary structure, homodimer. Pyridoxal 5'-phosphate is required as a cofactor.

It is found in the cytoplasm. The enzyme catalyses (S)-4-amino-5-oxopentanoate = 5-aminolevulinate. Its pathway is porphyrin-containing compound metabolism; protoporphyrin-IX biosynthesis; 5-aminolevulinate from L-glutamyl-tRNA(Glu): step 2/2. The polypeptide is Glutamate-1-semialdehyde 2,1-aminomutase (Desulforudis audaxviator (strain MP104C)).